A 267-amino-acid polypeptide reads, in one-letter code: 4-hydroxy-tetrahydrodipicolinate reductase (267 aa).

Residues 8–13 and glutamate 34 contribute to the NAD(+) site; that span reads GAAGRM. Arginine 35 contributes to the NADP(+) binding site. NAD(+) is bound by residues 98–100 and 122–125; these read GST and APNM. Catalysis depends on histidine 155, which acts as the Proton donor/acceptor. Histidine 156 contributes to the (S)-2,3,4,5-tetrahydrodipicolinate binding site. Lysine 159 serves as the catalytic Proton donor. 165 to 166 is a (S)-2,3,4,5-tetrahydrodipicolinate binding site; the sequence is GT.

The protein belongs to the DapB family.

Its subcellular location is the cytoplasm. The enzyme catalyses (S)-2,3,4,5-tetrahydrodipicolinate + NAD(+) + H2O = (2S,4S)-4-hydroxy-2,3,4,5-tetrahydrodipicolinate + NADH + H(+). The catalysed reaction is (S)-2,3,4,5-tetrahydrodipicolinate + NADP(+) + H2O = (2S,4S)-4-hydroxy-2,3,4,5-tetrahydrodipicolinate + NADPH + H(+). It participates in amino-acid biosynthesis; L-lysine biosynthesis via DAP pathway; (S)-tetrahydrodipicolinate from L-aspartate: step 4/4. Functionally, catalyzes the conversion of 4-hydroxy-tetrahydrodipicolinate (HTPA) to tetrahydrodipicolinate. This chain is 4-hydroxy-tetrahydrodipicolinate reductase, found in Geotalea uraniireducens (strain Rf4) (Geobacter uraniireducens).